A 194-amino-acid polypeptide reads, in one-letter code: MIGLRPAFSTMLFLLLLTGGVYPLLTTALGQWWFPWQANGSLIHKDNVIRGSALIGQSFTAAGYFHGRPSATADTPYNPLASGGSNLAASNPELDAQIQSRVAALRAANPQASSAVPVELATASASGLDNNLTPGAAAWQIPRVAAARQLPVEQVAQLVAEYTHRPLARFLGQPVVNIVELNLALDALQGHRAK.

The helical transmembrane segment at 12 to 34 (LFLLLLTGGVYPLLTTALGQWWF) threads the bilayer.

The protein belongs to the KdpC family. In terms of assembly, the system is composed of three essential subunits: KdpA, KdpB and KdpC.

The protein localises to the cell inner membrane. In terms of biological role, part of the high-affinity ATP-driven potassium transport (or Kdp) system, which catalyzes the hydrolysis of ATP coupled with the electrogenic transport of potassium into the cytoplasm. This subunit acts as a catalytic chaperone that increases the ATP-binding affinity of the ATP-hydrolyzing subunit KdpB by the formation of a transient KdpB/KdpC/ATP ternary complex. This chain is Potassium-transporting ATPase KdpC subunit, found in Salmonella enteritidis PT4 (strain P125109).